A 244-amino-acid polypeptide reads, in one-letter code: Isoprenyl transferase (244 aa).

Asp-20 is a catalytic residue. Asp-20 lines the Mg(2+) pocket. Substrate contacts are provided by residues 21 to 24 (GNGR), Trp-25, Arg-33, His-37, and 65 to 67 (SSE). Residue Asn-68 is the Proton acceptor of the active site. Substrate-binding positions include Trp-69, Arg-71, Arg-188, and 194–196 (RIS). Glu-207 lines the Mg(2+) pocket.

It belongs to the UPP synthase family. Homodimer. Mg(2+) is required as a cofactor.

Its function is as follows. Catalyzes the condensation of isopentenyl diphosphate (IPP) with allylic pyrophosphates generating different type of terpenoids. The chain is Isoprenyl transferase from Rhodopirellula baltica (strain DSM 10527 / NCIMB 13988 / SH1).